Consider the following 454-residue polypeptide: UPF0210 protein EUBREC_1565 (454 aa).

This sequence belongs to the UPF0210 family. Homodimer.

The sequence is that of UPF0210 protein EUBREC_1565 from Agathobacter rectalis (strain ATCC 33656 / DSM 3377 / JCM 17463 / KCTC 5835 / VPI 0990) (Eubacterium rectale).